We begin with the raw amino-acid sequence, 342 residues long: D-erythrose-4-phosphate dehydrogenase (342 aa).

12–13 contributes to the NAD(+) binding site; it reads RI. Substrate is bound by residues 154–156, R200, 213–214, and R236; these read SCT and TK. The active-site Nucleophile is C155. N318 is a binding site for NAD(+).

The protein belongs to the glyceraldehyde-3-phosphate dehydrogenase family. Epd subfamily. As to quaternary structure, homotetramer.

It is found in the cytoplasm. The catalysed reaction is D-erythrose 4-phosphate + NAD(+) + H2O = 4-phospho-D-erythronate + NADH + 2 H(+). The protein operates within cofactor biosynthesis; pyridoxine 5'-phosphate biosynthesis; pyridoxine 5'-phosphate from D-erythrose 4-phosphate: step 1/5. Functionally, catalyzes the NAD-dependent conversion of D-erythrose 4-phosphate to 4-phosphoerythronate. The chain is D-erythrose-4-phosphate dehydrogenase from Klebsiella pneumoniae (strain 342).